Here is a 575-residue protein sequence, read N- to C-terminus: Phosphoenolpyruvate-protein phosphotransferase (575 aa).

Histidine 191 acts as the Tele-phosphohistidine intermediate in catalysis. Phosphoenolpyruvate-binding residues include arginine 298 and arginine 334. Residues glutamate 435 and aspartate 459 each contribute to the Mg(2+) site. Phosphoenolpyruvate is bound by residues 458 to 459 (ND) and arginine 469. Catalysis depends on cysteine 506, which acts as the Proton donor.

This sequence belongs to the PEP-utilizing enzyme family. Homodimer. It depends on Mg(2+) as a cofactor.

The protein localises to the cytoplasm. It carries out the reaction L-histidyl-[protein] + phosphoenolpyruvate = N(pros)-phospho-L-histidyl-[protein] + pyruvate. Its function is as follows. General (non sugar-specific) component of the phosphoenolpyruvate-dependent sugar phosphotransferase system (sugar PTS). This major carbohydrate active-transport system catalyzes the phosphorylation of incoming sugar substrates concomitantly with their translocation across the cell membrane. Enzyme I transfers the phosphoryl group from phosphoenolpyruvate (PEP) to the phosphoryl carrier protein (HPr). In Lactococcus lactis subsp. lactis (strain IL1403) (Streptococcus lactis), this protein is Phosphoenolpyruvate-protein phosphotransferase (ptsI).